The primary structure comprises 244 residues: Probable transcriptional regulatory protein CHY_1525 (244 aa).

The protein belongs to the TACO1 family.

It localises to the cytoplasm. The chain is Probable transcriptional regulatory protein CHY_1525 from Carboxydothermus hydrogenoformans (strain ATCC BAA-161 / DSM 6008 / Z-2901).